The sequence spans 851 residues: Nucleolar RNA helicase 2 (851 aa).

Residues 1 to 260 (MPGKLRSGAK…IPVEQKEGAF (260 aa)) are disordered. 2 positions are modified to phosphoserine: Ser7 and Ser13. Basic and acidic residues-rich tracts occupy residues 26–42 (PSEK…KTEE) and 99–113 (EPLE…KEII). Residue Lys39 is modified to N6-acetyllysine. Tandem repeats lie at residues 117 to 153 (PSEE…GLSQ), 154 to 190 (PSEE…GLSQ), and 191 to 227 (PSEE…GLSQ). The tract at residues 117–227 (PSEEEADMPK…SPRLKDGLSQ (111 aa)) is 3 X 37 AA tandem repeats. The residue at position 118 (Ser118) is a Phosphoserine. Over residues 133–145 (GKEANGDAGEKSP) the composition is skewed to basic and acidic residues. At Lys134 the chain carries N6-acetyllysine. Residues Ser144, Ser155, Ser181, Ser192, Ser218, Ser236, Ser243, Ser244, and Ser245 each carry the phosphoserine modification. A compositionally biased stretch (basic and acidic residues) spans 170-182 (GKEANGDAGEKSP). Over residues 207-223 (GKEASGDAGEKSPRLKD) the composition is skewed to basic and acidic residues. A compositionally biased stretch (polar residues) spans 226–237 (SQPSEPKSNSSD). The segment covering 246–257 (ETEKEIPVEQKE) has biased composition (basic and acidic residues). The Q motif signature appears at 258–286 (GAFSNFPISEETVKLLKARGVNFLFPIQA). Positions 289-468 (FHHVYSGKDL…KKYMKSTYEQ (180 aa)) constitute a Helicase ATP-binding domain. 302 to 309 (ARTGTGKT) contributes to the ATP binding site. Residue Thr368 is modified to Phosphothreonine. The DEAD box signature appears at 411 to 414 (DEVD). The Helicase C-terminal domain occupies 501-645 (DVIRVYSGHQ…GVPSATEIIK (145 aa)). Ser639 is modified (phosphoserine). Lys672 is subject to N6-acetyllysine. Positions 783 to 851 (QPELEGPPDG…KRSFSKAFGQ (69 aa)) are disordered. 3 tandem repeats follow at residues 807 to 811 (FRGQR), 817 to 823 (FRGQGQR), and 829 to 833 (FRGQR). The interval 807–833 (FRGQRGGSRNFRGQGQRGGSRNFRGQR) is 3 X 5 AA repeats. Lys847 carries the post-translational modification N6-acetyllysine.

This sequence belongs to the DEAD box helicase family. DDX21/DDX50 subfamily. Homodimer; homodimerizes via its N-terminus. Found in a multi-helicase-TICAM1 complex at least composed of DHX36, DDX1, DDX21 and TICAM1; this complex exists in resting cells with or without poly(I:C) RNA ligand stimulation. Interacts (via C-terminus) with TICAM1 (via TIR domain). Interacts with DHX36 (via C-terminus); this interaction serves as bridges to TICAM1. Interacts (via C-terminus) with DDX1 (via B30.2/SPRY domain); this interaction serves as bridges to TICAM1. Component of the B-WICH complex, at least composed of SMARCA5/SNF2H, BAZ1B/WSTF, SF3B1, DEK, MYO1C, ERCC6, MYBBP1A and DDX21. Interacts with C1QBP. Interacts with JUN. Interacts with WDR46. Interacts with MCM3AP. Interacts with WDR43. Interacts with KPNA3. Interacts with GID4. In terms of processing, acetylation by CREBBP/CBP inhibits the helicase activity. Deacetylation by SIRT7 promotes the helicase activity and overcomes R-loop-mediated stalling of RNA polymerases. As to expression, highly expressed in liver and testis. Expressed at lower level in brain, lungs, and skeletal muscle.

The protein resides in the nucleus. Its subcellular location is the nucleolus. It localises to the nucleoplasm. It is found in the cytoplasm. The protein localises to the cytosol. The protein resides in the mitochondrion. It carries out the reaction ATP + H2O = ADP + phosphate + H(+). With respect to regulation, acetylation inhibits the helicase activity. Its function is as follows. RNA helicase that acts as a sensor of the transcriptional status of both RNA polymerase (Pol) I and II: promotes ribosomal RNA (rRNA) processing and transcription from polymerase II (Pol II). Binds various RNAs, such as rRNAs, snoRNAs, 7SK and, at lower extent, mRNAs. In the nucleolus, localizes to rDNA locus, where it directly binds rRNAs and snoRNAs, and promotes rRNA transcription, processing and modification. Required for rRNA 2'-O-methylation, possibly by promoting the recruitment of late-acting snoRNAs SNORD56 and SNORD58 with pre-ribosomal complexes. In the nucleoplasm, binds 7SK RNA and is recruited to the promoters of Pol II-transcribed genes: acts by facilitating the release of P-TEFb from inhibitory 7SK snRNP in a manner that is dependent on its helicase activity, thereby promoting transcription of its target genes. Functions as cofactor for JUN-activated transcription: required for phosphorylation of JUN at 'Ser-77'. Can unwind double-stranded RNA (helicase) and can fold or introduce a secondary structure to a single-stranded RNA (foldase). Together with SIRT7, required to prevent R-loop-associated DNA damage and transcription-associated genomic instability: deacetylation by SIRT7 activates the helicase activity, thereby overcoming R-loop-mediated stalling of RNA polymerases. Involved in rRNA processing. May bind to specific miRNA hairpins. Component of a multi-helicase-TICAM1 complex that acts as a cytoplasmic sensor of viral double-stranded RNA (dsRNA) and plays a role in the activation of a cascade of antiviral responses including the induction of pro-inflammatory cytokines via the adapter molecule TICAM1. The polypeptide is Nucleolar RNA helicase 2 (Ddx21) (Mus musculus (Mouse)).